The sequence spans 243 residues: Beta-glucanase (243 aa).

Residues 1 to 27 form the signal peptide; the sequence is MSYRVKRMLMLLVTGLFLSLSTFAASA. The region spanning 29–243 is the GH16 domain; it reads AQTGGSFYEP…SLHWVRYTKR (215 aa). An intrachain disulfide couples Cys-61 to Cys-90. The active-site Nucleophile is Glu-134. Catalysis depends on Glu-138, which acts as the Proton donor.

Belongs to the glycosyl hydrolase 16 family.

The enzyme catalyses Hydrolysis of (1-&gt;4)-beta-D-glucosidic linkages in beta-D-glucans containing (1-&gt;3)- and (1-&gt;4)-bonds.. This is Beta-glucanase (bg1) from Bacillus licheniformis.